A 546-amino-acid chain; its full sequence is Protein FAM124A (546 aa).

Disordered regions lie at residues 1-37 (MDPK…SELS), 286-360 (FPKP…FQRS), and 488-546 (SSSS…EFYI). Residues 24 to 36 (SDYSHLSSTSSEL) are compositionally biased toward low complexity. The span at 286–302 (FPKPGRVHHASEKKRHS) shows a compositional bias: basic residues. 2 stretches are compositionally biased toward polar residues: residues 304-324 (PLPS…SPLN) and 347-360 (ANST…FQRS). Low complexity predominate over residues 488 to 511 (SSSSATARAAPPAPSTSTLTDSSP).

It belongs to the FAM124 family.

The protein is Protein FAM124A (FAM124A) of Homo sapiens (Human).